Here is a 475-residue protein sequence, read N- to C-terminus: Pregnancy-specific glycoprotein 22 (475 aa).

The N-terminal stretch at 1 to 35 (MEVSSELLSNGWTSWQRVLLTASLLTCWLLPITAG) is a signal peptide. Ig-like V-type domains lie at 44–140 (KLVE…FLQV), 162–260 (PASV…YLQV), and 280–380 (PVPP…QVNV). 3 N-linked (GlcNAc...) asparagine glycosylation sites follow: N103, N110, and N231. The Ig-like C2-type domain maps to 387-471 (PVMRVTDSTV…SKTSLPVRLT (85 aa)). A disulfide bridge links C406 with C454.

The protein belongs to the immunoglobulin superfamily. CEA family.

The protein localises to the secreted. Functionally, may have an angiogenic function during early placental development. Binds to cell-surface heparan sulfate proteoglycans (HSPGs), and stimulates secretion of the proangiogenic factors VEGFA and TGFB from uterine dendritic cells and natural killer cells. Also induces endothelial tube formation in vitro. The chain is Pregnancy-specific glycoprotein 22 from Mus musculus (Mouse).